A 591-amino-acid chain; its full sequence is Ferric-chelate reductase 1 (591 aa).

Residues 6 to 26 traverse the membrane as a helical segment; it reads FTVSAFILLLHVSFVANYPSG. The Reelin domain occupies 13–179; sequence LLLHVSFVAN…FTTPEATIAP (167 aa). N-linked (GlcNAc...) asparagine glycosylation is found at asparagine 50, asparagine 85, asparagine 308, asparagine 321, and asparagine 353. Residues 216-331 form the DOMON domain; sequence ERACVLLSFT…ASYYIFVADG (116 aa). A Cytochrome b561 domain is found at 335-533; that stretch reads DGRIHKHSQQ…VGTEIILEIH (199 aa). Residues 372-392 form a helical membrane-spanning segment; that stretch reads VHGALMFVAWMTTVSVGVLIA. The heme b site is built by histidine 373 and histidine 413. Helical transmembrane passes span 416-436 and 445-465; these read LMLTTSALTFIAFLLPFIYRG and HPYLGFIVMVLAVLQLLLAAF. Positions 445 and 481 each coordinate heme b. Helical transmembrane passes span 490–510, 514–534, and 568–588; these read IIAVAAMFLGMDLPGLNLPGP, YAMIGFVAWHVGTEIILEIHA, and VVLAIYVCGNLTFLTMFLSAI.

Belongs to the FRRS1 family. The cofactor is heme b.

It is found in the membrane. Functionally, ferric-chelate reductases reduce Fe(3+) to Fe(2+) before its transport from the endosome to the cytoplasm. The polypeptide is Ferric-chelate reductase 1 (FRRS1) (Bos taurus (Bovine)).